The primary structure comprises 612 residues: Chaperone protein DnaK (612 aa).

A Phosphothreonine; by autocatalysis modification is found at T174. Residues 578 to 612 are disordered; sequence GAQAGAQGQGAAGGQKQDGNVYDADYKVVDDDKKE. A compositionally biased stretch (basic and acidic residues) spans 601-612; the sequence is ADYKVVDDDKKE.

It belongs to the heat shock protein 70 family.

Its function is as follows. Acts as a chaperone. In Moorella thermoacetica (strain ATCC 39073 / JCM 9320), this protein is Chaperone protein DnaK.